A 375-amino-acid chain; its full sequence is 23S rRNA (uracil(747)-C(5))-methyltransferase RlmC (375 aa).

The [4Fe-4S] cluster site is built by Cys3, Cys11, Cys14, and Cys87. The S-adenosyl-L-methionine site is built by Gln212, Phe241, Glu262, and Asn307. The Nucleophile role is filled by Cys334.

It belongs to the class I-like SAM-binding methyltransferase superfamily. RNA M5U methyltransferase family. RlmC subfamily.

The catalysed reaction is uridine(747) in 23S rRNA + S-adenosyl-L-methionine = 5-methyluridine(747) in 23S rRNA + S-adenosyl-L-homocysteine + H(+). Catalyzes the formation of 5-methyl-uridine at position 747 (m5U747) in 23S rRNA. This chain is 23S rRNA (uracil(747)-C(5))-methyltransferase RlmC, found in Escherichia coli (strain K12 / MC4100 / BW2952).